We begin with the raw amino-acid sequence, 173 residues long: Large ribosomal subunit protein uL22c (173 aa).

It belongs to the universal ribosomal protein uL22 family. In terms of assembly, part of the 50S ribosomal subunit.

The protein localises to the plastid. It localises to the chloroplast. In terms of biological role, this protein binds specifically to 23S rRNA. Functionally, the globular domain of the protein is located near the polypeptide exit tunnel on the outside of the subunit, while an extended beta-hairpin is found that lines the wall of the exit tunnel in the center of the 70S ribosome. This Drimys granadensis protein is Large ribosomal subunit protein uL22c (rpl22).